The following is a 70-amino-acid chain: Brevinin-1CG3 (70 aa).

A signal peptide spans 1-22 (MFTLKKSLLLLFFLGTINLSLC). The propeptide at 23–44 (EQERNAEEERRDDSDKRDVEVE) is removed in mature form. A disulfide bond links C64 and C70.

Belongs to the frog skin active peptide (FSAP) family. Brevinin subfamily. Expressed by the skin glands.

It localises to the secreted. Its function is as follows. Antimicrobial peptide active against a variety of Gram-positive and some Gram-negative bacterial strains. Has antifungal activity against a slime mold isolate. Has hemolytic activity against human erythrocytes. This is Brevinin-1CG3 from Amolops chunganensis (Chungan torrent frog).